Consider the following 426-residue polypeptide: Glutamate-1-semialdehyde 2,1-aminomutase (426 aa).

Lys265 carries the post-translational modification N6-(pyridoxal phosphate)lysine.

This sequence belongs to the class-III pyridoxal-phosphate-dependent aminotransferase family. HemL subfamily. As to quaternary structure, homodimer. Requires pyridoxal 5'-phosphate as cofactor.

The protein localises to the cytoplasm. It carries out the reaction (S)-4-amino-5-oxopentanoate = 5-aminolevulinate. Its pathway is porphyrin-containing compound metabolism; protoporphyrin-IX biosynthesis; 5-aminolevulinate from L-glutamyl-tRNA(Glu): step 2/2. The sequence is that of Glutamate-1-semialdehyde 2,1-aminomutase from Cronobacter sakazakii (strain ATCC BAA-894) (Enterobacter sakazakii).